Reading from the N-terminus, the 402-residue chain is Phosphoglycerate kinase (402 aa).

Substrate contacts are provided by residues 21–23 (DFN), R36, 59–62 (HLGR), R119, and R154. ATP contacts are provided by residues K207, G298, E329, and 356–359 (GGDA).

The protein belongs to the phosphoglycerate kinase family. As to quaternary structure, monomer.

It is found in the cytoplasm. The catalysed reaction is (2R)-3-phosphoglycerate + ATP = (2R)-3-phospho-glyceroyl phosphate + ADP. The protein operates within carbohydrate degradation; glycolysis; pyruvate from D-glyceraldehyde 3-phosphate: step 2/5. The sequence is that of Phosphoglycerate kinase (pgk) from Chlamydia pneumoniae (Chlamydophila pneumoniae).